Consider the following 241-residue polypeptide: Ribosomal RNA small subunit methyltransferase J (241 aa).

S-adenosyl-L-methionine contacts are provided by residues 94–95 (RD) and Asp163.

Belongs to the methyltransferase superfamily. RsmJ family.

The protein localises to the cytoplasm. It catalyses the reaction guanosine(1516) in 16S rRNA + S-adenosyl-L-methionine = N(2)-methylguanosine(1516) in 16S rRNA + S-adenosyl-L-homocysteine + H(+). In terms of biological role, specifically methylates the guanosine in position 1516 of 16S rRNA. This is Ribosomal RNA small subunit methyltransferase J from Francisella tularensis subsp. novicida (strain U112).